The following is a 463-amino-acid chain: Glutamyl-tRNA reductase (463 aa).

Residues 49-52 (TCNR), S109, 114-116 (EQQ), and Q120 each bind substrate. C50 functions as the Nucleophile in the catalytic mechanism. Position 196–201 (196–201 (GAGAMS)) interacts with NADP(+).

Belongs to the glutamyl-tRNA reductase family. As to quaternary structure, homodimer.

It carries out the reaction (S)-4-amino-5-oxopentanoate + tRNA(Glu) + NADP(+) = L-glutamyl-tRNA(Glu) + NADPH + H(+). Its pathway is porphyrin-containing compound metabolism; protoporphyrin-IX biosynthesis; 5-aminolevulinate from L-glutamyl-tRNA(Glu): step 1/2. Catalyzes the NADPH-dependent reduction of glutamyl-tRNA(Glu) to glutamate 1-semialdehyde (GSA). In Corynebacterium glutamicum (strain R), this protein is Glutamyl-tRNA reductase.